Reading from the N-terminus, the 183-residue chain is Inner membrane-spanning protein YciB (183 aa).

5 helical membrane passes run 22–44 (IYTATGALVVVTGLQLIYSWVRY), 54–74 (TFLLVGFFGGLTVFFHDDAFI), 76–96 (WKVTVINILFALGLLISRYGF), 119–139 (VNLAWVGFFTVCGLLNLYVAF), and 149–169 (FKVFGLLGMTLVFTLLSGVYL).

Belongs to the YciB family.

The protein localises to the cell inner membrane. Its function is as follows. Plays a role in cell envelope biogenesis, maintenance of cell envelope integrity and membrane homeostasis. The protein is Inner membrane-spanning protein YciB of Aeromonas salmonicida (strain A449).